Reading from the N-terminus, the 467-residue chain is UPF0236 protein TTE0610/TTE0881/TTE1053/TTE2432 (467 aa).

Belongs to the UPF0236 family.

The protein is UPF0236 protein TTE0610/TTE0881/TTE1053/TTE2432 of Caldanaerobacter subterraneus subsp. tengcongensis (strain DSM 15242 / JCM 11007 / NBRC 100824 / MB4) (Thermoanaerobacter tengcongensis).